A 318-amino-acid chain; its full sequence is 4-hydroxy-3-methylbut-2-enyl diphosphate reductase (318 aa).

Cys12 lines the [4Fe-4S] cluster pocket. Residues His41 and His74 each contribute to the (2E)-4-hydroxy-3-methylbut-2-enyl diphosphate site. The dimethylallyl diphosphate site is built by His41 and His74. Isopentenyl diphosphate is bound by residues His41 and His74. Residue Cys96 participates in [4Fe-4S] cluster binding. His124 lines the (2E)-4-hydroxy-3-methylbut-2-enyl diphosphate pocket. His124 contributes to the dimethylallyl diphosphate binding site. His124 provides a ligand contact to isopentenyl diphosphate. Residue Glu126 is the Proton donor of the active site. (2E)-4-hydroxy-3-methylbut-2-enyl diphosphate is bound at residue Thr168. [4Fe-4S] cluster is bound at residue Cys198. 4 residues coordinate (2E)-4-hydroxy-3-methylbut-2-enyl diphosphate: Ser226, Ser227, Asn228, and Ser270. Residues Ser226, Ser227, Asn228, and Ser270 each contribute to the dimethylallyl diphosphate site. Residues Ser226, Ser227, Asn228, and Ser270 each coordinate isopentenyl diphosphate.

It belongs to the IspH family. [4Fe-4S] cluster is required as a cofactor.

The catalysed reaction is isopentenyl diphosphate + 2 oxidized [2Fe-2S]-[ferredoxin] + H2O = (2E)-4-hydroxy-3-methylbut-2-enyl diphosphate + 2 reduced [2Fe-2S]-[ferredoxin] + 2 H(+). The enzyme catalyses dimethylallyl diphosphate + 2 oxidized [2Fe-2S]-[ferredoxin] + H2O = (2E)-4-hydroxy-3-methylbut-2-enyl diphosphate + 2 reduced [2Fe-2S]-[ferredoxin] + 2 H(+). It participates in isoprenoid biosynthesis; dimethylallyl diphosphate biosynthesis; dimethylallyl diphosphate from (2E)-4-hydroxy-3-methylbutenyl diphosphate: step 1/1. It functions in the pathway isoprenoid biosynthesis; isopentenyl diphosphate biosynthesis via DXP pathway; isopentenyl diphosphate from 1-deoxy-D-xylulose 5-phosphate: step 6/6. Its function is as follows. Catalyzes the conversion of 1-hydroxy-2-methyl-2-(E)-butenyl 4-diphosphate (HMBPP) into a mixture of isopentenyl diphosphate (IPP) and dimethylallyl diphosphate (DMAPP). Acts in the terminal step of the DOXP/MEP pathway for isoprenoid precursor biosynthesis. The protein is 4-hydroxy-3-methylbut-2-enyl diphosphate reductase of Psychrobacter arcticus (strain DSM 17307 / VKM B-2377 / 273-4).